A 130-amino-acid polypeptide reads, in one-letter code: Small ribosomal subunit protein uS9 (130 aa).

The protein belongs to the universal ribosomal protein uS9 family.

This Bordetella bronchiseptica (strain ATCC BAA-588 / NCTC 13252 / RB50) (Alcaligenes bronchisepticus) protein is Small ribosomal subunit protein uS9.